Reading from the N-terminus, the 104-residue chain is Large ribosomal subunit protein uL24 (104 aa).

Belongs to the universal ribosomal protein uL24 family. As to quaternary structure, part of the 50S ribosomal subunit.

In terms of biological role, one of two assembly initiator proteins, it binds directly to the 5'-end of the 23S rRNA, where it nucleates assembly of the 50S subunit. Functionally, one of the proteins that surrounds the polypeptide exit tunnel on the outside of the subunit. The chain is Large ribosomal subunit protein uL24 from Corynebacterium aurimucosum (strain ATCC 700975 / DSM 44827 / CIP 107346 / CN-1) (Corynebacterium nigricans).